The following is a 939-amino-acid chain: MADYRKTLNMPDTPFPMRGDLAKREPGWVADWQAKKLYQKVRKAAAGRPKFVLHDGPPYANGDIHIGHAVNKILKDIIVRSKTLAGFDAPYVPGWDCHGLPIEHQIEKQHGKHLPADRARELCREYAAEQIERQKKDFIRLGVLGDWDNPYRTMNFSNEADEIRALGELFRKGFLFKGLKPVNWCFDCGSALAEAEVEYQDKKSPAIDVGFPLVDNERDKLAHAFGLDTLPEQPVYIVIWTTTPWTIPSNQALNVHPELIYELVETPKGLLILAAELRASALERYQLEGRVLAAARGVALDRINFRHPFYDRLSPVFLGDYVAADAGTGIVHSAPAYGLDDFVSCTRYGMRNDEILNPVQADGTFAGSLPFFGGLSVWDANPKIVDKLAEVGSLFASGTLTHSYMHCWRHKTPVIYRATTQWFVGMDRLPGREAVEPGSATLRELALKAVDETQFYPAWGKARLHSMIANRPDWCVSRQRNWGVPIPLFLHKETGEPHPRSLELLEQVAQRVEQHGIDAWFKLDAAELLGSDVAQYDKMRDTLDVWFDSGTTHWTVLRGSHAADSQWPAALYLEGSDQHRGWFHSSLLTGCAIDGRAPYDALLTHGFVVDGQGKKMSKSKGNVVAPQEVSDKLGAEILRLWVAATDYSGELTISKEILDRVVEVYRRLRNTLRFLLANTGDFDIARDGVPVEEWLDIDHYALALTRRLQEQVTGDYARFEFHKIVQALQNFAAEDLGAFYVDILKDRLYTTKADSRARRAAQTALWHITQAITRMMAPILTFTAEEIWRVTGNDAEDSVMLHTWHELPELGASDEILARWELIRSARAEVQKVLESLRSDGRIGASLQAEVRVRASGARFDALASVGADLHFVLITSRAELVRVETEADEGVDAAPSSHQKCGRCWHFREDIGVDADHPELCGRCCTNLHGDGESRTHA.

Residues 58-68 carry the 'HIGH' region motif; it reads PYANGDIHIGH. L-isoleucyl-5'-AMP is bound at residue E574. A 'KMSKS' region motif is present at residues 615-619; that stretch reads KMSKS. Position 618 (K618) interacts with ATP. Residues C902, C905, C922, and C925 each contribute to the Zn(2+) site.

The protein belongs to the class-I aminoacyl-tRNA synthetase family. IleS type 1 subfamily. As to quaternary structure, monomer. The cofactor is Zn(2+).

The protein resides in the cytoplasm. It catalyses the reaction tRNA(Ile) + L-isoleucine + ATP = L-isoleucyl-tRNA(Ile) + AMP + diphosphate. Catalyzes the attachment of isoleucine to tRNA(Ile). As IleRS can inadvertently accommodate and process structurally similar amino acids such as valine, to avoid such errors it has two additional distinct tRNA(Ile)-dependent editing activities. One activity is designated as 'pretransfer' editing and involves the hydrolysis of activated Val-AMP. The other activity is designated 'posttransfer' editing and involves deacylation of mischarged Val-tRNA(Ile). This Aromatoleum aromaticum (strain DSM 19018 / LMG 30748 / EbN1) (Azoarcus sp. (strain EbN1)) protein is Isoleucine--tRNA ligase.